The chain runs to 337 residues: Glyceraldehyde-3-phosphate dehydrogenase 1 (337 aa).

NAD(+) contacts are provided by residues 12 to 13, Asp-34, and Arg-79; that span reads RI. Residues 150-152, Thr-181, 210-211, and Arg-233 contribute to the D-glyceraldehyde 3-phosphate site; these read SCT and TG. The Nucleophile role is filled by Cys-151. Asn-315 serves as a coordination point for NAD(+).

The protein belongs to the glyceraldehyde-3-phosphate dehydrogenase family. In terms of assembly, homotetramer.

It is found in the cytoplasm. The enzyme catalyses D-glyceraldehyde 3-phosphate + phosphate + NAD(+) = (2R)-3-phospho-glyceroyl phosphate + NADH + H(+). It participates in carbohydrate degradation; glycolysis; pyruvate from D-glyceraldehyde 3-phosphate: step 1/5. The chain is Glyceraldehyde-3-phosphate dehydrogenase 1 (GPD1) from Mucor circinelloides f. lusitanicus (Mucor racemosus var. lusitanicus).